The sequence spans 203 residues: AFG2-interacting ribosome maturation factor (203 aa).

In terms of assembly, part of the 55LCC heterohexameric ATPase complex composed at least of AIRIM, AFG2A, AFG2B and CINP. Does not associate with pre-60S ribosomal particles. Phosphorylated on serines by CK2 kinase.

It is found in the nucleus. Its subcellular location is the cytoplasm. Functionally, part of the 55LCC heterohexameric ATPase complex which is chromatin-associated and promotes replisome proteostasis to maintain replication fork progression and genome stability. Required for replication fork progression, sister chromatid cohesion, and chromosome stability. The ATPase activity is specifically enhanced by replication fork DNA and is coupled to cysteine protease-dependent cleavage of replisome substrates in response to replication fork damage. Uses ATPase activity to process replisome substrates in S-phase, facilitating their proteolytic turnover from chromatin to ensure DNA replication and mitotic fidelity. Involved in the cytoplasmic maturation steps of pre-60S ribosomal particles by promoting the release of shuttling protein RSL24D1/RLP24 from the pre-ribosomal particles. This chain is AFG2-interacting ribosome maturation factor, found in Homo sapiens (Human).